The following is a 168-amino-acid chain: MEYYNVGKIVNTHGVRGEVRVLATTDFIDERFAKGNTLYLQQSGEPLPLTIESTRQHKGFVLVKFVGYDNINDVEQFRDHELMVSADDQQPLDDGQYYYHQIIGLDVETTDGRHLGKIKEILSPGANDVWVVERPEKRDLLLPVIDEVVKNVDLDKNFVTVELMEGLE.

In terms of domain architecture, PRC barrel spans 94-167 (DGQYYYHQII…FVTVELMEGL (74 aa)).

This sequence belongs to the RimM family. In terms of assembly, binds ribosomal protein uS19.

The protein localises to the cytoplasm. An accessory protein needed during the final step in the assembly of 30S ribosomal subunit, possibly for assembly of the head region. Essential for efficient processing of 16S rRNA. May be needed both before and after RbfA during the maturation of 16S rRNA. It has affinity for free ribosomal 30S subunits but not for 70S ribosomes. The chain is Ribosome maturation factor RimM from Limosilactobacillus reuteri (strain DSM 20016) (Lactobacillus reuteri).